Consider the following 110-residue polypeptide: Minor capsid protein VP2 (110 aa).

Belongs to the vesivirus VP2 protein family. Homooligomer. The portal-like structure consists in 12 copies of VP2. Interacts with capsid protein VP1.

The protein resides in the virion. The protein localises to the host cytoplasm. Functionally, minor structural protein that forms a portal-like structure at a unique three-fold axis of symmetry, following binding to the host receptor. The channel formed by VP2 may allow the delivery of the viral genome through the host endosomal membrane. This is Minor capsid protein VP2 from Otariidae (fur seals &amp; sea lions).